We begin with the raw amino-acid sequence, 209 residues long: MQIVASLTDPSQAATAQSQGADLLELRFDLMEGDPVDIARRCRAISKLPLIATFRSALEGGRYFGSPEEWAKKIAPVLPLVDYVDIEQQFARKSGLVREAGKAIIASHHTAEMLPLHVLFVLEQELRAYGDIPKIIVTPHNEDELIDLIAFTRAAKKPVCTGVMGSAFRYARAILPLFGSELAYCHAGVPAAEGQYSVAEFVALMKMLS.

Residues Ser-6, 25–27, and Arg-55 contribute to the 3-dehydroquinate site; that span reads ELR. His-109 serves as the catalytic Proton donor/acceptor. The active-site Schiff-base intermediate with substrate is Lys-134. 2 residues coordinate 3-dehydroquinate: Arg-172 and Gln-195.

This sequence belongs to the type-I 3-dehydroquinase family. As to quaternary structure, homodimer.

The enzyme catalyses 3-dehydroquinate = 3-dehydroshikimate + H2O. It participates in metabolic intermediate biosynthesis; chorismate biosynthesis; chorismate from D-erythrose 4-phosphate and phosphoenolpyruvate: step 3/7. In terms of biological role, involved in the third step of the chorismate pathway, which leads to the biosynthesis of aromatic amino acids. Catalyzes the cis-dehydration of 3-dehydroquinate (DHQ) and introduces the first double bond of the aromatic ring to yield 3-dehydroshikimate. This chain is 3-dehydroquinate dehydratase, found in Methanoregula boonei (strain DSM 21154 / JCM 14090 / 6A8).